Consider the following 225-residue polypeptide: Probable methylthioribulose-1-phosphate dehydratase (225 aa).

Substrate is bound at residue C86. The Zn(2+) site is built by H104 and H106. Residue E127 is the Proton donor/acceptor of the active site. H183 contacts Zn(2+).

Belongs to the aldolase class II family. MtnB subfamily. It depends on Zn(2+) as a cofactor.

The protein resides in the cytoplasm. The catalysed reaction is 5-(methylsulfanyl)-D-ribulose 1-phosphate = 5-methylsulfanyl-2,3-dioxopentyl phosphate + H2O. Its pathway is amino-acid biosynthesis; L-methionine biosynthesis via salvage pathway; L-methionine from S-methyl-5-thio-alpha-D-ribose 1-phosphate: step 2/6. Catalyzes the dehydration of methylthioribulose-1-phosphate (MTRu-1-P) into 2,3-diketo-5-methylthiopentyl-1-phosphate (DK-MTP-1-P). The sequence is that of Probable methylthioribulose-1-phosphate dehydratase from Leishmania braziliensis.